A 314-amino-acid chain; its full sequence is tRNA(Ile)-lysidine synthase (314 aa).

37–42 is a binding site for ATP; the sequence is SGGPDS.

It belongs to the tRNA(Ile)-lysidine synthase family.

The protein localises to the cytoplasm. It catalyses the reaction cytidine(34) in tRNA(Ile2) + L-lysine + ATP = lysidine(34) in tRNA(Ile2) + AMP + diphosphate + H(+). Ligates lysine onto the cytidine present at position 34 of the AUA codon-specific tRNA(Ile) that contains the anticodon CAU, in an ATP-dependent manner. Cytidine is converted to lysidine, thus changing the amino acid specificity of the tRNA from methionine to isoleucine. The chain is tRNA(Ile)-lysidine synthase from Corynebacterium glutamicum (strain ATCC 13032 / DSM 20300 / JCM 1318 / BCRC 11384 / CCUG 27702 / LMG 3730 / NBRC 12168 / NCIMB 10025 / NRRL B-2784 / 534).